Reading from the N-terminus, the 332-residue chain is Glycerol-3-phosphate dehydrogenase [NAD(P)+] (332 aa).

Residues Trp11, Arg30, and Lys108 each contribute to the NADPH site. Sn-glycerol 3-phosphate is bound by residues Lys108, Gly137, and Ser139. Ala141 serves as a coordination point for NADPH. Lys192, Asp245, Ser255, Arg256, and Asn257 together coordinate sn-glycerol 3-phosphate. Lys192 functions as the Proton acceptor in the catalytic mechanism. Arg256 contacts NADPH. The NADPH site is built by Val280 and Glu282.

The protein belongs to the NAD-dependent glycerol-3-phosphate dehydrogenase family.

The protein resides in the cytoplasm. It carries out the reaction sn-glycerol 3-phosphate + NAD(+) = dihydroxyacetone phosphate + NADH + H(+). It catalyses the reaction sn-glycerol 3-phosphate + NADP(+) = dihydroxyacetone phosphate + NADPH + H(+). It participates in membrane lipid metabolism; glycerophospholipid metabolism. Catalyzes the reduction of the glycolytic intermediate dihydroxyacetone phosphate (DHAP) to sn-glycerol 3-phosphate (G3P), the key precursor for phospholipid synthesis. This Burkholderia pseudomallei (strain 1710b) protein is Glycerol-3-phosphate dehydrogenase [NAD(P)+].